A 129-amino-acid chain; its full sequence is Small ribosomal subunit protein uS9 (129 aa).

It belongs to the universal ribosomal protein uS9 family.

This is Small ribosomal subunit protein uS9 from Chlorobium phaeobacteroides (strain DSM 266 / SMG 266 / 2430).